The primary structure comprises 533 residues: Calcitonin receptor (533 aa).

A signal peptide spans 1 to 41 (MTPRRSRVKRRNLRKPKMRFLLVNRFTLLLLLLVSPTPVLQ). The Extracellular portion of the chain corresponds to 42–163 (APTNLTDSGL…FTSEKLQNAY (122 aa)). 4 N-linked (GlcNAc...) asparagine glycosylation sites follow: Asn45, Asn90, Asn142, and Asn147. 3 cysteine pairs are disulfide-bonded: Cys72–Cys98, Cys89–Cys129, and Cys112–Cys151. Residues 164–186 (VLYYLALVGHSLSIAALVASMLI) traverse the membrane as a helical segment. At 187-198 (FWIFKNLSCQRV) the chain is on the cytoplasmic side. The chain crosses the membrane as a helical span at residues 199-219 (TLHKHMFLTYILNSIIIIIHL). Topologically, residues 220-273 (VEVVPNGDLVRRDPMHIFHHNTHMWTMQWELSPPLPLSAHEGKMDPHASEVISC) are extracellular. A disulfide bridge links Cys273 with Cys343. The helical transmembrane segment at 274–296 (KVLHFLHQYMMSCNYFWMLCEGI) threads the bilayer. Topologically, residues 297–313 (YLHTLIVMAVFTDEQRL) are cytoplasmic. Residues 314-334 (RWYYLLGWGFPIVPTIIHAIT) form a helical membrane-spanning segment. Residues 335 to 350 (RALYYNDNCWLSAETH) are Extracellular-facing. Residues 351-374 (LLYIIHGPVMVALVVNFFFLLNIV) form a helical membrane-spanning segment. The Cytoplasmic segment spans residues 375-394 (RVLVTKMRQTHEAESYMYLK). Residues 395-413 (AVKATMVLVPLLGIQFVVF) form a helical membrane-spanning segment. Over 414–421 (PWRPSNKV) the chain is Extracellular. The chain crosses the membrane as a helical span at residues 422–448 (LGKIYDYLMHSLIHFQGFFVATIYCFC). Topologically, residues 449-533 (NHEVQVTLKR…MNVIQQDASA (85 aa)) are cytoplasmic.

This sequence belongs to the G-protein coupled receptor 2 family. Heterodimer of CALCR and RAMP1, RAMP2 or RAMP3; the receptor complexes function as AMYR1, AMYR2 and AMYR3 receptors, respectively, and respond to amylin/IAPP, calcitonin/CT and CGRP1 ligands. Interacts with GPRASP2.

It localises to the cell membrane. In terms of biological role, g protein-coupled receptor activated by ligand peptides amylin (IAPP), calcitonin (CT/CALCA) and calcitonin gene-related peptide type 1 (CGRP1/CALCA). CALCR interacts with receptor-activity-modifying proteins RAMP1, 2 and 3 to form receptor complexes AMYR1, 2 and 3, respectively. IAPP, CT and CGRP1 activate CALCR and AMYRs with distinct modes of receptor activation resulting in specific phenotypes. Ligand binding causes a conformation change that triggers signaling via guanine nucleotide-binding proteins (G proteins) and modulates the activity of downstream effectors. Activates cAMP-dependent pathway. This is Calcitonin receptor from Mus musculus (Mouse).